Consider the following 328-residue polypeptide: Testis-specific serine/threonine-protein kinase 4 (328 aa).

Residues 25–293 (YEVGKAIGHG…ILDIIKDSWV (269 aa)) form the Protein kinase domain. ATP is bound by residues 31–39 (IGHGSYGSV) and lysine 54. Residue aspartate 148 is the Proton acceptor of the active site. A Phosphothreonine modification is found at threonine 197.

The protein belongs to the protein kinase superfamily. CAMK Ser/Thr protein kinase family. As to quaternary structure, homodimer. Interacts with HSP90; this interaction stabilizes and activates TSSK4. Interacts with ODF2 (via C-terminus); this interaction promotes ODF2 phosphorylation on 'Ser-95'. May interact with CREM. Interacts with CREB1; this interaction facilitates phosphorylation on 'Ser-133'. Interacts with QRICH2. Mg(2+) is required as a cofactor. Post-translationally, activated by autophosphorylation on Thr-197. ODF2 potentiates the autophosphorylation activity of TSSK4 at Thr-197. Ubiquitinated; HSP90 activity negatively regulates ubiquitination and degradation. In terms of tissue distribution, expressed only in the testis.

The protein resides in the cytoplasmic vesicle. It localises to the secretory vesicle. Its subcellular location is the acrosome. It is found in the cell projection. The protein localises to the cilium. The protein resides in the flagellum. The catalysed reaction is L-seryl-[protein] + ATP = O-phospho-L-seryl-[protein] + ADP + H(+). It carries out the reaction L-threonyl-[protein] + ATP = O-phospho-L-threonyl-[protein] + ADP + H(+). Its activity is regulated as follows. Activated by phosphorylation on Thr-197. Functionally, serine/threonine kinase which is involved in male germ cell development and in mature sperm function. May be involved in the Cre/Creb signaling pathway. Phosphorylates CREB1 on 'Ser-133' in vitro and can stimulate Cre/Creb pathway in cells. Phosphorylates CREM on 'Ser-116' in vitro. Phosphorylates ODF2 on 'Ser-95'. The protein is Testis-specific serine/threonine-protein kinase 4 of Homo sapiens (Human).